The following is a 402-amino-acid chain: Baeyer-Villiger oxidase notM (402 aa).

Belongs to the questin oxidase family.

Baeyer-Villiger oxidase; part of the gene cluster that mediates the biosynthesis of notoamide, a fungal indole alkaloid that belongs to a family of natural products containing a characteristic bicyclo[2.2.2]diazaoctane core. The first step of notoamide biosynthesis involves coupling of L-proline and L-tryptophan by the bimodular NRPS notE, to produce cyclo-L-tryptophan-L-proline called brevianamide F. The reverse prenyltransferase notF then acts as a deoxybrevianamide E synthase and converts brevianamide F to deoxybrevianamide E via reverse prenylation at C-2 of the indole ring leading to the bicyclo[2.2.2]diazaoctane core. Deoxybrevianamide E is further hydroxylated at C-6 of the indole ring, likely catalyzed by the cytochrome P450 monooxygenase notG, to yield 6-hydroxy-deoxybrevianamide E. 6-hydroxy-deoxybrevianamide E is a specific substrate of the prenyltransferase notC for normal prenylation at C-7 to produce 6-hydroxy-7-prenyl-deoxybrevianamide, also called notoamide S. As the proposed pivotal branching point in notoamide biosynthesis, notoamide S can be diverted to notoamide E through an oxidative pyran ring closure putatively catalyzed by either notH cytochrome P450 monooxygenase or the notD FAD-linked oxidoreductase. This step would be followed by an indole 2,3-epoxidation-initiated pinacol-like rearrangement catalyzed by the notB FAD-dependent monooxygenase leading to the formation of notoamide C and notoamide D. On the other hand notoamide S is converted to notoamide T by notH (or notD), a bifunctional oxidase that also functions as the intramolecular Diels-Alderase responsible for generation of (+)-notoamide T. To generate antipodal (-)-notoaminide T, notH' (or notD') in Aspergillus versicolor is expected to catalyze a Diels-Alder reaction leading to the opposite stereochemistry. The remaining oxidoreductase notD (or notH) likely catalyzes the oxidative pyran ring formation to yield (+)-stephacidin A. The FAD-dependent monooxygenase notI is highly similar to notB and is predicted to catalyze a similar conversion from (+)-stephacidin A to (-)-notoamide B via the 2,3-epoxidation of (+)-stephacidin A followed by a pinacol-type rearrangement. Finally, it remains unclear which enzyme could be responsible for the final hydroxylation steps leading to notoamide A and sclerotiamide. The function of notM in the notoamide biosynthesis has not been determined yet. This Aspergillus sp. (strain MF297-2) protein is Baeyer-Villiger oxidase notM.